Here is a 366-residue protein sequence, read N- to C-terminus: MSGSTLGKLFCVTVFGESHGPAIGCVVDGCPPGMTLGESDIQHDLDRRKPGTSRHVTQRRESDTAEILSGVYEGRTTGTPIALLIRNEDQRSKDYGNIAATFRPGHADYTYTQKYGFRDPRGGGRSSARLTAPIVGAGAIAKKWLKEKYGIVIRGYMSALGPLDIPFESWDEVDNNAFFSPNAAIVPELEQYMDALRKSGDSVGARVSVVAENVPPGWGEPLYDKLDADLAHALMGLNAVKGVEIGDGMQAARQLGTEHRDEITPAGFLSNHAGGVLGGISSGQAIVAHVAIKPTSSMRLPGRSVDLDGQPIEVVTHGRHDPCVGIRATPIVEALTAIVLMDHALRHRAQCGDVASGVPIVPARLD.

Residues Arg48 and Arg54 each contribute to the NADP(+) site. FMN contacts are provided by residues 125 to 127, 238 to 239, Gly278, 293 to 297, and Arg319; these read RSS, NA, and KPTSS.

It belongs to the chorismate synthase family. In terms of assembly, homotetramer. It depends on FMNH2 as a cofactor.

It carries out the reaction 5-O-(1-carboxyvinyl)-3-phosphoshikimate = chorismate + phosphate. It functions in the pathway metabolic intermediate biosynthesis; chorismate biosynthesis; chorismate from D-erythrose 4-phosphate and phosphoenolpyruvate: step 7/7. In terms of biological role, catalyzes the anti-1,4-elimination of the C-3 phosphate and the C-6 proR hydrogen from 5-enolpyruvylshikimate-3-phosphate (EPSP) to yield chorismate, which is the branch point compound that serves as the starting substrate for the three terminal pathways of aromatic amino acid biosynthesis. This reaction introduces a second double bond into the aromatic ring system. The protein is Chorismate synthase of Thiobacillus denitrificans (strain ATCC 25259 / T1).